Reading from the N-terminus, the 284-residue chain is MEMO1 family protein MMP1387 (284 aa).

This sequence belongs to the MEMO1 family.

This is MEMO1 family protein MMP1387 from Methanococcus maripaludis (strain DSM 14266 / JCM 13030 / NBRC 101832 / S2 / LL).